The primary structure comprises 156 residues: Peptide methionine sulfoxide reductase MsrA (156 aa).

Residue Cys-10 is part of the active site.

The protein belongs to the MsrA Met sulfoxide reductase family.

The enzyme catalyses L-methionyl-[protein] + [thioredoxin]-disulfide + H2O = L-methionyl-(S)-S-oxide-[protein] + [thioredoxin]-dithiol. It catalyses the reaction [thioredoxin]-disulfide + L-methionine + H2O = L-methionine (S)-S-oxide + [thioredoxin]-dithiol. Has an important function as a repair enzyme for proteins that have been inactivated by oxidation. Catalyzes the reversible oxidation-reduction of methionine sulfoxide in proteins to methionine. The sequence is that of Peptide methionine sulfoxide reductase MsrA from Acidobacterium capsulatum (strain ATCC 51196 / DSM 11244 / BCRC 80197 / JCM 7670 / NBRC 15755 / NCIMB 13165 / 161).